The following is a 224-amino-acid chain: Holliday junction branch migration complex subunit RuvA (224 aa).

The segment at 1–64 (MIGRLSGVLV…EDLLQLYGFP (64 aa)) is domain I. The segment at 65-143 (TLLEKEWHRL…EVMAMGGTLE (79 aa)) is domain II. Residues 144 to 171 (AALDGVIEDGMAASEGIEPPSAARPAVP) form a flexible linker region. A domain III region spans residues 172–224 (SAASDQAGALSALVNLGYGQGEAASAVATAAGEGAVGETDIIRAALRLLAPKG).

The protein belongs to the RuvA family. Homotetramer. Forms an RuvA(8)-RuvB(12)-Holliday junction (HJ) complex. HJ DNA is sandwiched between 2 RuvA tetramers; dsDNA enters through RuvA and exits via RuvB. An RuvB hexamer assembles on each DNA strand where it exits the tetramer. Each RuvB hexamer is contacted by two RuvA subunits (via domain III) on 2 adjacent RuvB subunits; this complex drives branch migration. In the full resolvosome a probable DNA-RuvA(4)-RuvB(12)-RuvC(2) complex forms which resolves the HJ.

It is found in the cytoplasm. In terms of biological role, the RuvA-RuvB-RuvC complex processes Holliday junction (HJ) DNA during genetic recombination and DNA repair, while the RuvA-RuvB complex plays an important role in the rescue of blocked DNA replication forks via replication fork reversal (RFR). RuvA specifically binds to HJ cruciform DNA, conferring on it an open structure. The RuvB hexamer acts as an ATP-dependent pump, pulling dsDNA into and through the RuvAB complex. HJ branch migration allows RuvC to scan DNA until it finds its consensus sequence, where it cleaves and resolves the cruciform DNA. The chain is Holliday junction branch migration complex subunit RuvA from Dinoroseobacter shibae (strain DSM 16493 / NCIMB 14021 / DFL 12).